A 128-amino-acid polypeptide reads, in one-letter code: 14 kDa zinc-binding protein (128 aa).

Residues isoleucine 18–glycine 128 enclose the HIT domain. The short motif at histidine 112 to histidine 116 is the Histidine triad motif element.

In terms of assembly, homodimer.

In Zea mays (Maize), this protein is 14 kDa zinc-binding protein (ZBP14).